The chain runs to 313 residues: tRNA dimethylallyltransferase (313 aa).

12 to 19 contacts ATP; that stretch reads GPTASGKS. 14-19 contacts substrate; sequence TASGKS. Interaction with substrate tRNA regions lie at residues 37 to 40 and 161 to 165; these read DSMQ and QRSIR.

The protein belongs to the IPP transferase family. As to quaternary structure, monomer. Mg(2+) is required as a cofactor.

It catalyses the reaction adenosine(37) in tRNA + dimethylallyl diphosphate = N(6)-dimethylallyladenosine(37) in tRNA + diphosphate. Catalyzes the transfer of a dimethylallyl group onto the adenine at position 37 in tRNAs that read codons beginning with uridine, leading to the formation of N6-(dimethylallyl)adenosine (i(6)A). This Pelagibacter ubique (strain HTCC1062) protein is tRNA dimethylallyltransferase.